The sequence spans 291 residues: Prolyl 4-hydroxylase 5 (291 aa).

The Cytoplasmic segment spans residues 1–22; that stretch reads MASKSKQHLRYQPRKSVSRSTQ. The chain crosses the membrane as a helical; Signal-anchor for type II membrane protein span at residues 23–43; that stretch reads AFTVLILLLVVILILLGLGIL. Topologically, residues 44 to 291 are extracellular; that stretch reads SLPNANRNSS…KWFHVHEFKV (248 aa). Residue Asn-51 is glycosylated (N-linked (GlcNAc...) asparagine). The Fe2OG dioxygenase domain occupies 163-286; the sequence is NGEGLQVLHY…KWSSTKWFHV (124 aa). His-181 and Asp-183 together coordinate Fe cation. The N-linked (GlcNAc...) asparagine glycan is linked to Asn-222. His-267 is a binding site for Fe cation. Lys-277 is a 2-oxoglutarate binding site.

This sequence belongs to the P4HA family. Fe(2+) serves as cofactor. It depends on L-ascorbate as a cofactor. As to expression, expressed in epidermal root hair cells (trichoblasts).

It localises to the endoplasmic reticulum membrane. It is found in the golgi apparatus membrane. It catalyses the reaction L-prolyl-[collagen] + 2-oxoglutarate + O2 = trans-4-hydroxy-L-prolyl-[collagen] + succinate + CO2. In terms of biological role, catalyzes the post-translational formation of 4-hydroxyproline in -Xaa-Pro-Gly- sequences in proline-rich peptide sequences of plant glycoproteins and other proteins. Hydroxyprolines are important constituent of many plant cell wall glycoproteins such as extensins, hydroxyproline-rich glycoproteins, lectins and arabinogalactan proteins. Possesses high affinity for leucine-rich repeat and proline-rich extensins of root cell walls that are essential for root hair development. Hydroxyprolines define the subsequent O-glycosylation sites by arabinosyltransferases which elongate the O-arabinosides on extensins. The sequence is that of Prolyl 4-hydroxylase 5 from Arabidopsis thaliana (Mouse-ear cress).